The primary structure comprises 314 residues: Methionyl-tRNA formyltransferase (314 aa).

113–116 (SLLP) contributes to the (6S)-5,6,7,8-tetrahydrofolate binding site.

It belongs to the Fmt family.

It catalyses the reaction L-methionyl-tRNA(fMet) + (6R)-10-formyltetrahydrofolate = N-formyl-L-methionyl-tRNA(fMet) + (6S)-5,6,7,8-tetrahydrofolate + H(+). In terms of biological role, attaches a formyl group to the free amino group of methionyl-tRNA(fMet). The formyl group appears to play a dual role in the initiator identity of N-formylmethionyl-tRNA by promoting its recognition by IF2 and preventing the misappropriation of this tRNA by the elongation apparatus. The polypeptide is Methionyl-tRNA formyltransferase (Pseudomonas syringae pv. tomato (strain ATCC BAA-871 / DC3000)).